The chain runs to 225 residues: UPF0173 metal-dependent hydrolase PAE2160 (225 aa).

The protein belongs to the UPF0173 family.

The chain is UPF0173 metal-dependent hydrolase PAE2160 from Pyrobaculum aerophilum (strain ATCC 51768 / DSM 7523 / JCM 9630 / CIP 104966 / NBRC 100827 / IM2).